Here is a 140-residue protein sequence, read N- to C-terminus: Putative membrane protein ORF7 (140 aa).

A helical transmembrane segment spans residues 44–60 (TCAVSFFALFMLIIWVL). Residues 66–118 (PEGSTTRGTDAHTQTEGSTTRGTDAHTQTEGSRDQGSMTPEADDLTRPPLGHG) are disordered. Residues 68 to 103 (GSTTRGTDAHTQTEGSTTRGTDAHTQTEGSRDQGSM) show a composition bias toward polar residues.

It is found in the membrane. In Ictalurid herpesvirus 1 (strain Auburn) (IcHV-1), this protein is Putative membrane protein ORF7 (ORF7).